The sequence spans 120 residues: Non-specific lipid-transfer protein 1 (120 aa).

A signal peptide spans 1–25 (MARSMKLACVALVICMVVIAPMAEA). Intrachain disulfides connect Cys-29/Cys-78, Cys-39/Cys-55, Cys-56/Cys-101, and Cys-76/Cys-115. Residue Phe-120 is a propeptide.

The protein belongs to the plant LTP family. As to expression, expressed in roots, stem, leaves and tendrils of the mature plant.

In terms of biological role, plant non-specific lipid-transfer proteins transfer phospholipids as well as galactolipids across membranes. May play a role in wax or cutin deposition in the cell walls of expanding epidermal cells and certain secretory tissues. Binds saturated and unsaturated lipids, jasmonic acid and lysolipids. Has antifungal activity against A.niger VKM F-2259 (IC(50)=40 uM), F.oxysporum TCXA-4 (IC(50)=20-40), F.solani VKM F-142 (IC(50)=20-40 uM) and N.crassa VKM F-184 (IC(50)=40 uM). Has weak antibacterial activity against A.tumefaciens A281, C.michiganensis VKM Ac-1144 and P.syringae VKM B-1546. The protein is Non-specific lipid-transfer protein 1 of Pisum sativum (Garden pea).